The chain runs to 102 residues: Large ribosomal subunit protein bL21 (102 aa).

Positions K80 to P91 are enriched in basic residues. Residues K80–A102 are disordered.

This sequence belongs to the bacterial ribosomal protein bL21 family. Part of the 50S ribosomal subunit. Contacts protein L20.

Its function is as follows. This protein binds to 23S rRNA in the presence of protein L20. This is Large ribosomal subunit protein bL21 from Staphylococcus aureus (strain Mu3 / ATCC 700698).